Reading from the N-terminus, the 257-residue chain is Hydroxyacylglutathione hydrolase (257 aa).

Zn(2+)-binding residues include histidine 54, histidine 56, aspartate 58, histidine 59, histidine 113, aspartate 137, and histidine 175.

This sequence belongs to the metallo-beta-lactamase superfamily. Glyoxalase II family. Monomer. Zn(2+) is required as a cofactor.

The catalysed reaction is an S-(2-hydroxyacyl)glutathione + H2O = a 2-hydroxy carboxylate + glutathione + H(+). Its pathway is secondary metabolite metabolism; methylglyoxal degradation; (R)-lactate from methylglyoxal: step 2/2. Functionally, thiolesterase that catalyzes the hydrolysis of S-D-lactoyl-glutathione to form glutathione and D-lactic acid. The polypeptide is Hydroxyacylglutathione hydrolase (Crocosphaera subtropica (strain ATCC 51142 / BH68) (Cyanothece sp. (strain ATCC 51142))).